A 429-amino-acid polypeptide reads, in one-letter code: Glutamate-1-semialdehyde 2,1-aminomutase 1 (429 aa).

Lys268 carries the N6-(pyridoxal phosphate)lysine modification.

Belongs to the class-III pyridoxal-phosphate-dependent aminotransferase family. HemL subfamily. As to quaternary structure, homodimer. Pyridoxal 5'-phosphate serves as cofactor.

The protein localises to the cytoplasm. It carries out the reaction (S)-4-amino-5-oxopentanoate = 5-aminolevulinate. The protein operates within porphyrin-containing compound metabolism; protoporphyrin-IX biosynthesis; 5-aminolevulinate from L-glutamyl-tRNA(Glu): step 2/2. This chain is Glutamate-1-semialdehyde 2,1-aminomutase 1, found in Staphylococcus haemolyticus (strain JCSC1435).